Here is a 329-residue protein sequence, read N- to C-terminus: Ceramide synthase hyl-2 (329 aa).

N22 carries N-linked (GlcNAc...) asparagine glycosylation. The next 7 membrane-spanning stretches (helical) occupy residues V41–P61, A95–L115, V134–F154, F162–M182, V187–I207, F221–I241, and F270–F290. The TLC domain maps to S86–Q298.

It belongs to the sphingosine N-acyltransferase family. As to expression, strong expression in the gut, the posterior bulb of the pharynx, the hypoderm, and unidentified cells of the head and the tail.

The protein resides in the membrane. It carries out the reaction a very long-chain fatty acyl-CoA + a sphingoid base = an N-(very-long-chain fatty acyl)-sphingoid base + CoA + H(+). It catalyses the reaction a fatty acyl-CoA + sphinganine = an N-acylsphinganine + CoA + H(+). The enzyme catalyses docosanoyl-CoA + sphinganine = N-docosanoylsphinganine + CoA + H(+). The catalysed reaction is sphinganine + tetradecanoyl-CoA = N-(tetradecanoyl)-sphinganine + CoA + H(+). It carries out the reaction eicosanoyl-CoA + sphinganine = N-eicosanoylsphinganine + CoA + H(+). It catalyses the reaction 15-methylhexadecasphinganine + a fatty acyl-CoA = an N-acyl-15-methylhexadecasphinganine + CoA + H(+). It functions in the pathway lipid metabolism; sphingolipid metabolism. Catalyzes the acylation of sphingoid bases to form ceramides, which are key players in cell signaling events such as tolerances to heat, oxidation, and ultraviolet stress. C.elegans contain specific sphingoid bases, which are unique or different in structure compared to the sphingoid bases found in other animals. Two examples of these distinctive compounds are: 15-methylhexadecasphinganine and 15-methylhexadecasphing-4-enine. Exhibits substrate preference for long and very long fatty acyl-coA chains (C20-23). Required for adaptation of the nematode to anoxia. Anoxia tolerance may require one or more of the ceramide species that are either specifically or preferentially synthesized by HYL-2, and seems to be affected by a pathway that is parallel to that involving daf-2. The protein is Ceramide synthase hyl-2 (hyl-2) of Caenorhabditis elegans.